The primary structure comprises 1079 residues: Spermatogenesis-associated protein 31G1 (1079 aa).

8 disordered regions span residues 97–145 (EVEE…GSEG), 261–281 (EDLEGMAPDPQLLPPPSSPSV), 297–317 (GVLSGAEAPTQSPGTSPLEVL), 331–362 (KMPQAFEPPMPPPCQSPASLSEPRKVSPEGGL), 376–412 (EKPQASESSMPVPCPPLDSLPELQRESSLEDPSRYKP), 506–566 (NLWA…SPPP), 637–678 (VPVF…EQRK), and 840–975 (PHSS…NHPA). A compositionally biased stretch (acidic residues) spans 98 to 113 (VEEEGEEEEEGEDEAS). Positions 336–345 (FEPPMPPPCQ) are enriched in pro residues. The span at 398–412 (LQRESSLEDPSRYKP) shows a compositional bias: basic and acidic residues. Low complexity-rich tracts occupy residues 551–562 (NSSASRSPSLAL) and 645–655 (SSPSSNSVSKS). Residues 669 to 678 (PDGEAVEQRK) show a composition bias toward basic and acidic residues. Residues 942–951 (AKKREHPRKP) are compositionally biased toward basic residues.

Dispensable for normal development and fertility. The chain is Spermatogenesis-associated protein 31G1 from Homo sapiens (Human).